We begin with the raw amino-acid sequence, 348 residues long: UDP-3-O-acylglucosamine N-acyltransferase (348 aa).

His-257 (proton acceptor) is an active-site residue.

Belongs to the transferase hexapeptide repeat family. LpxD subfamily. In terms of assembly, homotrimer.

It carries out the reaction a UDP-3-O-[(3R)-3-hydroxyacyl]-alpha-D-glucosamine + a (3R)-hydroxyacyl-[ACP] = a UDP-2-N,3-O-bis[(3R)-3-hydroxyacyl]-alpha-D-glucosamine + holo-[ACP] + H(+). The protein operates within bacterial outer membrane biogenesis; LPS lipid A biosynthesis. Functionally, catalyzes the N-acylation of UDP-3-O-acylglucosamine using 3-hydroxyacyl-ACP as the acyl donor. Is involved in the biosynthesis of lipid A, a phosphorylated glycolipid that anchors the lipopolysaccharide to the outer membrane of the cell. In Bartonella henselae (strain ATCC 49882 / DSM 28221 / CCUG 30454 / Houston 1) (Rochalimaea henselae), this protein is UDP-3-O-acylglucosamine N-acyltransferase.